We begin with the raw amino-acid sequence, 332 residues long: Mitochondrial glycine transporter (332 aa).

3 Solcar repeats span residues 11–94, 121–205, and 235–319; these read SSSY…LRQN, LSNL…LKKR, and TSAS…LIRR. 6 consecutive transmembrane segments (helical) span residues 17–42, 69–95, 127–152, 180–203, 239–265, and 294–312; these read FGAGLGSGILSAVLLQPADLLKTRVQ, GTVPSALRTGFGSAIYFTSLNALRQNV, LTTGAVARAGAGFILMPMTIIKVRYE, GFGATAIRDAPYAGLYVLFYEELK, INFGSGVLAAGLATAITNPFDAIKTRI, and GLGLRMGRKAVSSALAWTI.

It belongs to the mitochondrial carrier (TC 2.A.29) family. SLC25A38 subfamily.

It localises to the mitochondrion inner membrane. The enzyme catalyses glycine(in) = glycine(out). Its function is as follows. Mitochondrial glycine transporter that imports glycine into the mitochondrial matrix. Plays an important role in providing glycine for the first enzymatic step in heme biosynthesis, the condensation of glycine with succinyl-CoA to produce 5-aminolevulinate (ALA) in the mitochondrial matrix. In Botryotinia fuckeliana (strain B05.10) (Noble rot fungus), this protein is Mitochondrial glycine transporter.